The sequence spans 137 residues: Nucleoside diphosphate kinase (137 aa).

Residues K10, F58, R86, T92, R103, and N113 each coordinate ATP. Catalysis depends on H116, which acts as the Pros-phosphohistidine intermediate.

This sequence belongs to the NDK family. As to quaternary structure, homotetramer. The cofactor is Mg(2+).

It is found in the cytoplasm. The catalysed reaction is a 2'-deoxyribonucleoside 5'-diphosphate + ATP = a 2'-deoxyribonucleoside 5'-triphosphate + ADP. The enzyme catalyses a ribonucleoside 5'-diphosphate + ATP = a ribonucleoside 5'-triphosphate + ADP. Its function is as follows. Major role in the synthesis of nucleoside triphosphates other than ATP. The ATP gamma phosphate is transferred to the NDP beta phosphate via a ping-pong mechanism, using a phosphorylated active-site intermediate. The protein is Nucleoside diphosphate kinase of Helicobacter pylori (strain ATCC 700392 / 26695) (Campylobacter pylori).